A 152-amino-acid polypeptide reads, in one-letter code: Xanthine-guanine phosphoribosyltransferase (152 aa).

5-phospho-alpha-D-ribose 1-diphosphate-binding positions include 37–38 (RG), R69, and 88–96 (DDLVDTGVT). R69 contacts GMP. Mg(2+) is bound at residue D89. Positions 92 and 135 each coordinate guanine. 2 residues coordinate xanthine: D92 and I135. GMP is bound by residues 92–96 (DTGVT) and 134–135 (WI).

Belongs to the purine/pyrimidine phosphoribosyltransferase family. XGPT subfamily. Homotetramer. It depends on Mg(2+) as a cofactor.

It is found in the cell inner membrane. It carries out the reaction GMP + diphosphate = guanine + 5-phospho-alpha-D-ribose 1-diphosphate. The enzyme catalyses XMP + diphosphate = xanthine + 5-phospho-alpha-D-ribose 1-diphosphate. It catalyses the reaction IMP + diphosphate = hypoxanthine + 5-phospho-alpha-D-ribose 1-diphosphate. It participates in purine metabolism; GMP biosynthesis via salvage pathway; GMP from guanine: step 1/1. It functions in the pathway purine metabolism; XMP biosynthesis via salvage pathway; XMP from xanthine: step 1/1. Its function is as follows. Purine salvage pathway enzyme that catalyzes the transfer of the ribosyl-5-phosphate group from 5-phospho-alpha-D-ribose 1-diphosphate (PRPP) to the N9 position of the 6-oxopurines guanine and xanthine to form the corresponding ribonucleotides GMP (guanosine 5'-monophosphate) and XMP (xanthosine 5'-monophosphate), with the release of PPi. To a lesser extent, also acts on hypoxanthine. This is Xanthine-guanine phosphoribosyltransferase from Sodalis glossinidius (strain morsitans).